A 256-amino-acid polypeptide reads, in one-letter code: Adenosine 5'-phosphosulfate reductase (256 aa).

Residues Cys-120, Cys-121, Cys-203, and Cys-206 each coordinate [4Fe-4S] cluster. Cys-231 serves as the catalytic Nucleophile; cysteine thiosulfonate intermediate.

This sequence belongs to the PAPS reductase family. CysH subfamily. [4Fe-4S] cluster is required as a cofactor.

Its subcellular location is the cytoplasm. It catalyses the reaction [thioredoxin]-disulfide + sulfite + AMP + 2 H(+) = adenosine 5'-phosphosulfate + [thioredoxin]-dithiol. It participates in sulfur metabolism; hydrogen sulfide biosynthesis; sulfite from sulfate. Its function is as follows. Catalyzes the formation of sulfite from adenosine 5'-phosphosulfate (APS) using thioredoxin as an electron donor. The sequence is that of Adenosine 5'-phosphosulfate reductase from Allochromatium vinosum (strain ATCC 17899 / DSM 180 / NBRC 103801 / NCIMB 10441 / D) (Chromatium vinosum).